Reading from the N-terminus, the 131-residue chain is Ribosome-binding factor A (131 aa).

A disordered region spans residues Gln-110–Glu-131. A compositionally biased stretch (acidic residues) spans Glu-115–Glu-131.

It belongs to the RbfA family. In terms of assembly, monomer. Binds 30S ribosomal subunits, but not 50S ribosomal subunits or 70S ribosomes.

Its subcellular location is the cytoplasm. In terms of biological role, one of several proteins that assist in the late maturation steps of the functional core of the 30S ribosomal subunit. Associates with free 30S ribosomal subunits (but not with 30S subunits that are part of 70S ribosomes or polysomes). Required for efficient processing of 16S rRNA. May interact with the 5'-terminal helix region of 16S rRNA. This chain is Ribosome-binding factor A, found in Natranaerobius thermophilus (strain ATCC BAA-1301 / DSM 18059 / JW/NM-WN-LF).